We begin with the raw amino-acid sequence, 331 residues long: Small ribosomal subunit protein uS2 (331 aa).

Belongs to the universal ribosomal protein uS2 family.

In Rhodopseudomonas palustris (strain HaA2), this protein is Small ribosomal subunit protein uS2.